Consider the following 175-residue polypeptide: ATP synthase subunit d, mitochondrial (175 aa).

Ser-2 carries the N-acetylserine modification.

As to quaternary structure, F-type ATP synthases have 2 components, the catalytic core F(1) and the membrane-embedded component F(0), linked together by a central stalk and a peripheral stalk. The central stalk, also called rotor shaft, is often seen as part of F(1). The peripheral stalk is seen as part of F(0). F(0) contains the membrane channel next to the rotor. F-type ATP synthases form dimers but each monomer functions independently in ATP generation. The dimer consists of 18 different polypeptides: ATP1 (subunit alpha, part of F(1), 3 molecules per monomer), ATP2 (subunit beta, part of F(1), 3 molecules per monomer), ATP3 (subunit gamma, part of the central stalk), ATP4 (subunit b, part of the peripheral stalk), ATP5/OSCP (subunit 5/OSCP, part of the peripheral stalk), ATP6 (subunit a, part of the peripheral stalk), ATP7 (subunit d, part of the peripheral stalk), ATP8 (subunit 8, part of the peripheral stalk), OLI1 (subunit c, part of the rotor, 10 molecules per monomer), ATP14 (subunit h, part of the peripheral stalk), ATP15 (subunit epsilon, part of the central stalk), ATP16 (subunit delta, part of the central stalk), ATP17 (subunit f, part of the peripheral stalk), ATP18 (subunit i/j, part of the peripheral stalk). Dimer-specific subunits are ATP19 (subunit k, at interface between monomers), ATP20 (subunit g, at interface between monomers), TIM11 (subunit e, at interface between monomers). Also contains subunit L.

The protein resides in the mitochondrion inner membrane. Mitochondrial membrane ATP synthase (F(1)F(0) ATP synthase or Complex V) produces ATP from ADP in the presence of a proton gradient across the membrane which is generated by electron transport complexes of the respiratory chain. F-type ATP synthases consist of two structural domains, F(1) - containing the extramembraneous catalytic core, and F(0) - containing the membrane proton channel, linked together by a central stalk and a peripheral stalk. During catalysis, ATP synthesis in the catalytic domain of F(1) is coupled via a rotary mechanism of the central stalk subunits to proton translocation. Part of the complex F(0) domain and the peripheral stalk, which acts as a stator to hold the catalytic alpha/ATP1(3)beta/ATP2(3) subcomplex and subunit a/ATP6 static relative to the rotary elements. The chain is ATP synthase subunit d, mitochondrial from Pichia angusta (Yeast).